A 273-amino-acid polypeptide reads, in one-letter code: Formamidopyrimidine-DNA glycosylase (273 aa).

The active-site Schiff-base intermediate with DNA is proline 2. Catalysis depends on glutamate 3, which acts as the Proton donor. Lysine 58 acts as the Proton donor; for beta-elimination activity in catalysis. Residues histidine 91, arginine 110, and arginine 153 each contribute to the DNA site. An FPG-type zinc finger spans residues 238-272 (KVYGKEGQPCPRCGEDFVKIKICGRGTTYCLHCQK). The Proton donor; for delta-elimination activity role is filled by arginine 262.

The protein belongs to the FPG family. As to quaternary structure, monomer. Zn(2+) serves as cofactor.

It carries out the reaction Hydrolysis of DNA containing ring-opened 7-methylguanine residues, releasing 2,6-diamino-4-hydroxy-5-(N-methyl)formamidopyrimidine.. The catalysed reaction is 2'-deoxyribonucleotide-(2'-deoxyribose 5'-phosphate)-2'-deoxyribonucleotide-DNA = a 3'-end 2'-deoxyribonucleotide-(2,3-dehydro-2,3-deoxyribose 5'-phosphate)-DNA + a 5'-end 5'-phospho-2'-deoxyribonucleoside-DNA + H(+). Involved in base excision repair of DNA damaged by oxidation or by mutagenic agents. Acts as a DNA glycosylase that recognizes and removes damaged bases. Has a preference for oxidized purines, such as 7,8-dihydro-8-oxoguanine (8-oxoG). Has AP (apurinic/apyrimidinic) lyase activity and introduces nicks in the DNA strand. Cleaves the DNA backbone by beta-delta elimination to generate a single-strand break at the site of the removed base with both 3'- and 5'-phosphates. This is Formamidopyrimidine-DNA glycosylase from Lactobacillus delbrueckii subsp. bulgaricus (strain ATCC BAA-365 / Lb-18).